A 295-amino-acid chain; its full sequence is Glutamyl-Q tRNA(Asp) synthetase (295 aa).

Residues 6–10 and glutamate 42 each bind L-glutamate; that span reads RFAPS. A 'HIGH' region motif is present at residues 9–19; that stretch reads PSPTGAMHLGN. Zn(2+)-binding residues include cysteine 93, cysteine 95, tyrosine 118, and cysteine 122. Tyrosine 177 and arginine 195 together coordinate L-glutamate. Residues 233–237 carry the 'KMSKS' region motif; the sequence is RLAKR. Lysine 236 is a binding site for ATP.

Belongs to the class-I aminoacyl-tRNA synthetase family. GluQ subfamily. The cofactor is Zn(2+).

Its function is as follows. Catalyzes the tRNA-independent activation of glutamate in presence of ATP and the subsequent transfer of glutamate onto a tRNA(Asp). Glutamate is transferred on the 2-amino-5-(4,5-dihydroxy-2-cyclopenten-1-yl) moiety of the queuosine in the wobble position of the QUC anticodon. The protein is Glutamyl-Q tRNA(Asp) synthetase of Deinococcus radiodurans (strain ATCC 13939 / DSM 20539 / JCM 16871 / CCUG 27074 / LMG 4051 / NBRC 15346 / NCIMB 9279 / VKM B-1422 / R1).